A 330-amino-acid polypeptide reads, in one-letter code: tRNA uridine(34) hydroxylase (330 aa).

A Rhodanese domain is found at 123 to 217 (SDPEVILVDT…YLEEVKQEES (95 aa)). The active-site Cysteine persulfide intermediate is the Cys-177.

It belongs to the TrhO family.

It catalyses the reaction uridine(34) in tRNA + AH2 + O2 = 5-hydroxyuridine(34) in tRNA + A + H2O. Catalyzes oxygen-dependent 5-hydroxyuridine (ho5U) modification at position 34 in tRNAs. The polypeptide is tRNA uridine(34) hydroxylase (Shewanella sp. (strain ANA-3)).